Reading from the N-terminus, the 460-residue chain is A-type ATP synthase subunit B (460 aa).

It belongs to the ATPase alpha/beta chains family. In terms of assembly, has multiple subunits with at least A(3), B(3), C, D, E, F, H, I and proteolipid K(x).

It is found in the cell membrane. In terms of biological role, component of the A-type ATP synthase that produces ATP from ADP in the presence of a proton gradient across the membrane. The B chain is a regulatory subunit. The chain is A-type ATP synthase subunit B from Methanosarcina barkeri (strain Fusaro / DSM 804).